The chain runs to 122 residues: Neutral phospholipase A2 agkistrodotoxin (122 aa).

7 disulfides stabilise this stretch: Cys-26-Cys-115, Cys-28-Cys-44, Cys-43-Cys-95, Cys-49-Cys-122, Cys-50-Cys-88, Cys-57-Cys-81, and Cys-75-Cys-86. Residues Tyr-27, Gly-29, and Gly-31 each contribute to the Ca(2+) site. His-47 is an active-site residue. Asp-48 is a Ca(2+) binding site. Asp-89 is an active-site residue.

The cofactor is Ca(2+). Expressed by the venom gland.

It localises to the secreted. The catalysed reaction is a 1,2-diacyl-sn-glycero-3-phosphocholine + H2O = a 1-acyl-sn-glycero-3-phosphocholine + a fatty acid + H(+). Functionally, snake venom phospholipase A2 (PLA2) that inhibits neuromuscular transmission by blocking acetylcholine release from the nerve termini. PLA2 catalyzes the calcium-dependent hydrolysis of the 2-acyl groups in 3-sn-phosphoglycerides. This Gloydius halys (Chinese water mocassin) protein is Neutral phospholipase A2 agkistrodotoxin.